The sequence spans 258 residues: Enterotoxin type G (258 aa).

A signal peptide spans 1–25 (MKKLSTVIIILILEIVFHNMNYVNA). Cysteine 116 and cysteine 133 are disulfide-bonded.

The protein belongs to the staphylococcal/streptococcal toxin family.

The protein localises to the secreted. Staphylococcal enterotoxins cause the intoxication staphylococcal food poisoning syndrome. The illness is characterized by high fever, hypotension, diarrhea, shock, and in some cases death. The chain is Enterotoxin type G (entG) from Staphylococcus aureus (strain N315).